Consider the following 288-residue polypeptide: Phosphopantetheinyl transferase (288 aa).

Residues arginine 60, 99–104, and 118–121 each bind CoA; these read RTEMGK and NLSH. Mg(2+) is bound by residues aspartate 139 and glutamate 196. 196-200 contributes to the CoA binding site; it reads EAYLK.

This sequence belongs to the P-Pant transferase superfamily. AcpS family. Monomer.

The protein resides in the cytoplasm. The protein localises to the cytosol. The enzyme catalyses apo-[ACP] + CoA = holo-[ACP] + adenosine 3',5'-bisphosphate + H(+). It participates in lipid metabolism; fatty acid biosynthesis. Its function is as follows. Phosphopantetheinyl transferase that is essential for attaching phosphopantetheine to ACP domains of the polyunsaturated fatty acid (PUFA) synthase converting the inactive apo-synthase to the active holo-synthase. In Thraustochytrium sp. (strain ATCC 26185 / S-3), this protein is Phosphopantetheinyl transferase.